A 196-amino-acid chain; its full sequence is Retinol-binding protein 4 (196 aa).

The N-terminal stretch at 1–21 is a signal peptide; the sequence is MAYTWRALLLLALAFLGSSMA. Intrachain disulfides connect Cys25–Cys181, Cys91–Cys195, and Cys141–Cys150. Residue Gln119 coordinates substrate.

The protein belongs to the calycin superfamily. Lipocalin family. As to quaternary structure, interacts with TTR. Interaction with TTR prevents its loss by filtration through the kidney glomeruli. Interacts with STRA6.

The protein resides in the secreted. In terms of biological role, retinol-binding protein that mediates retinol transport in blood plasma. Delivers retinol from the liver stores to the peripheral tissues. Transfers the bound all-trans retinol to STRA6, that then facilitates retinol transport across the cell membrane. The polypeptide is Retinol-binding protein 4 (RBP4) (Gallus gallus (Chicken)).